Reading from the N-terminus, the 89-residue chain is Large ribosomal subunit protein bL31B (89 aa).

This sequence belongs to the bacterial ribosomal protein bL31 family. Type B subfamily. Part of the 50S ribosomal subunit.

The chain is Large ribosomal subunit protein bL31B from Haemophilus ducreyi (strain 35000HP / ATCC 700724).